A 1107-amino-acid polypeptide reads, in one-letter code: DNA-directed RNA polymerase subunit beta (1107 aa).

The span at 1062–1075 shows a compositional bias: basic and acidic residues; sequence DNEGNEKEKARELG. Residues 1062–1081 form a disordered region; it reads DNEGNEKEKARELGLDLPDN.

Belongs to the RNA polymerase beta chain family. In terms of assembly, the RNAP catalytic core consists of 2 alpha, 1 beta, 1 beta' and 1 omega subunit. When a sigma factor is associated with the core the holoenzyme is formed, which can initiate transcription.

The catalysed reaction is RNA(n) + a ribonucleoside 5'-triphosphate = RNA(n+1) + diphosphate. In terms of biological role, DNA-dependent RNA polymerase catalyzes the transcription of DNA into RNA using the four ribonucleoside triphosphates as substrates. The polypeptide is DNA-directed RNA polymerase subunit beta (Syntrophomonas wolfei subsp. wolfei (strain DSM 2245B / Goettingen)).